A 168-amino-acid polypeptide reads, in one-letter code: MAYTRSKIVDLVDGKIDPDTLHQMLSTPKDPERFVTYVEILQERMPWDDKIILPLGPKLFIVQQKVSKKWTVRCECGHDFCDWKDNWKLSARVHVRDTPQKMEEIYPRLMAPTPSWQVIREYFCPECGTLHDVEAPTPWYPVIHDFSPDIEGFYQEWLGLPVPERADA.

Heterohexamer of two alpha, two beta and two gamma subunits. Fe cation is required as a cofactor. It depends on Mg(2+) as a cofactor. Zn(2+) serves as cofactor.

The catalysed reaction is acetone + hydrogencarbonate + 2 ATP + 3 H2O = acetoacetate + 2 AMP + 4 phosphate + 4 H(+). Functionally, catalyzes the carboxylation of acetone to form acetoacetate. Has a reduced activity on butanone, and no activity on 2-pentatone, 3-pentatone, 2-hexanone, chloroacetone, pyruvate, phosphoenolpyruvate, acetaldehyde, propionaldehyde and propylene oxide. In Xanthobacter autotrophicus (strain ATCC BAA-1158 / Py2), this protein is Acetone carboxylase gamma subunit.